Consider the following 272-residue polypeptide: Orotidine 5'-phosphate decarboxylase (272 aa).

The Proton donor role is filled by K92.

This sequence belongs to the OMP decarboxylase family. Type 2 subfamily.

It catalyses the reaction orotidine 5'-phosphate + H(+) = UMP + CO2. The protein operates within pyrimidine metabolism; UMP biosynthesis via de novo pathway; UMP from orotate: step 2/2. The protein is Orotidine 5'-phosphate decarboxylase (pyrF) of Deinococcus radiodurans (strain ATCC 13939 / DSM 20539 / JCM 16871 / CCUG 27074 / LMG 4051 / NBRC 15346 / NCIMB 9279 / VKM B-1422 / R1).